Here is a 168-residue protein sequence, read N- to C-terminus: Large ribosomal subunit protein uL10 (168 aa).

The protein belongs to the universal ribosomal protein uL10 family. In terms of assembly, part of the ribosomal stalk of the 50S ribosomal subunit. The N-terminus interacts with L11 and the large rRNA to form the base of the stalk. The C-terminus forms an elongated spine to which L12 dimers bind in a sequential fashion forming a multimeric L10(L12)X complex.

Forms part of the ribosomal stalk, playing a central role in the interaction of the ribosome with GTP-bound translation factors. This chain is Large ribosomal subunit protein uL10, found in Clostridioides difficile (strain 630) (Peptoclostridium difficile).